Consider the following 363-residue polypeptide: Protein Wnt-5 (363 aa).

Positions 1–27 (MVGMTRIQSAEPVWILFVLTLYSSVLM) are cleaved as a signal peptide. Residues asparagine 48 and asparagine 98 are each glycosylated (N-linked (GlcNAc...) asparagine). 11 cysteine pairs are disulfide-bonded: cysteine 88-cysteine 99, cysteine 137-cysteine 145, cysteine 147-cysteine 165, cysteine 221-cysteine 235, cysteine 223-cysteine 230, cysteine 292-cysteine 323, cysteine 308-cysteine 318, cysteine 322-cysteine 362, cysteine 338-cysteine 353, cysteine 340-cysteine 350, and cysteine 345-cysteine 346. The O-palmitoleoyl serine; by PORCN moiety is linked to residue serine 227.

The protein belongs to the Wnt family. Post-translationally, palmitoleoylation is required for efficient binding to frizzled receptors. Depalmitoleoylation leads to Wnt signaling pathway inhibition.

The protein localises to the secreted. Its subcellular location is the extracellular space. The protein resides in the extracellular matrix. Ligand for members of the frizzled family of seven transmembrane receptors. Probable developmental protein. May be a signaling molecule which affects the development of discrete regions of tissues. Is likely to signal over only few cell diameters. The protein is Protein Wnt-5 (WNT5) of Halocynthia roretzi (Sea squirt).